Consider the following 641-residue polypeptide: Choline O-acetyltransferase (641 aa).

Serine 17 bears the Phosphoserine mark. The active-site Proton acceptor is the histidine 335. A Phosphoserine modification is found at serine 366. CoA is bound by residues 413 to 425 (GKTFIKKQKCSPD), serine 451, and glutamine 552. The tract at residues 615-641 (CSSRQPADSKPPTAKERARGPSQAKQS) is disordered.

Belongs to the carnitine/choline acetyltransferase family.

It carries out the reaction choline + acetyl-CoA = acetylcholine + CoA. Its function is as follows. Catalyzes the reversible synthesis of acetylcholine (ACh) from acetyl CoA and choline at cholinergic synapses. The chain is Choline O-acetyltransferase (Chat) from Mus musculus (Mouse).